A 661-amino-acid polypeptide reads, in one-letter code: Threonine--tRNA ligase (661 aa).

Residues 1–64 (MSHSVSLTFP…ADGKIEIVTR (64 aa)) form the TGS domain. The segment at 245–547 (DHRRLGREMD…LLENYAGHMP (303 aa)) is catalytic. Zn(2+) is bound by residues Cys-341, His-392, and His-524.

It belongs to the class-II aminoacyl-tRNA synthetase family. Homodimer. Requires Zn(2+) as cofactor.

Its subcellular location is the cytoplasm. The catalysed reaction is tRNA(Thr) + L-threonine + ATP = L-threonyl-tRNA(Thr) + AMP + diphosphate + H(+). Catalyzes the attachment of threonine to tRNA(Thr) in a two-step reaction: L-threonine is first activated by ATP to form Thr-AMP and then transferred to the acceptor end of tRNA(Thr). Also edits incorrectly charged L-seryl-tRNA(Thr). This is Threonine--tRNA ligase from Sinorhizobium fredii (strain NBRC 101917 / NGR234).